The following is a 203-amino-acid chain: Phosphatidylethanolamine N-methyltransferase (203 aa).

The enzyme catalyses a 1,2-diacyl-sn-glycero-3-phosphoethanolamine + S-adenosyl-L-methionine = a 1,2-diacyl-sn-glycero-3-phospho-N-methylethanolamine + S-adenosyl-L-homocysteine + H(+). The protein operates within phospholipid metabolism; phosphatidylcholine biosynthesis. In terms of biological role, this enzyme catalyzes three distinct methylation reactions for converting phosphatidylethanolamine to phosphatidylcholine. This Cereibacter sphaeroides (Rhodobacter sphaeroides) protein is Phosphatidylethanolamine N-methyltransferase (pmtA).